The sequence spans 71 residues: MKTQFVILIVAIVILQLISQSEALWGALLGLGSTLLSKLGKRGVQNMDQFDDIFEPELSEADLRYLQDLLR.

An N-terminal signal peptide occupies residues 1-23; that stretch reads MKTQFVILIVAIVILQLISQSEA. Position 39 is a leucine amide (leucine 39). Residues 40–71 constitute a propeptide that is removed on maturation; sequence GKRGVQNMDQFDDIFEPELSEADLRYLQDLLR.

It belongs to the non-disulfide-bridged peptide (NDBP) superfamily. Short antimicrobial peptide (group 4) family. As to expression, expressed by the venom gland.

It is found in the secreted. The protein resides in the target cell membrane. In terms of biological role, antimicrobial peptide with potent activity against bacteria S.aureus (MIC=9.3 uM), weak activity against E.coli (MIC&gt;100 uM), and weak activity against pathogenic yeasts C.albicans (MIC=100 uM) and C.glabrata (MIC=100 uM). Is not very effective against P.aeruginosa (MIC&gt;300 uM). Also provokes high hemolysis on human erythrocytes (HC(50)=4.8 uM). This Mesomexovis punctatus (Scorpion) protein is Antimicrobial peptide VpCT4.